Here is a 144-residue protein sequence, read N- to C-terminus: Probable calcium-binding protein CML31 (144 aa).

EF-hand domains follow at residues 1 to 31, 32 to 67, 72 to 107, and 108 to 143; these read MAEI…FSPQ, ITSE…NGGG, EEEV…LGEK, and HTME…NKES. Ca(2+) contacts are provided by D45, D47, D49, Q51, E56, D85, D87, D89, K91, E96, D121, D123, D125, and E132.

Potential calcium sensor. This Arabidopsis thaliana (Mouse-ear cress) protein is Probable calcium-binding protein CML31 (CML31).